We begin with the raw amino-acid sequence, 245 residues long: Ribonuclease PH (245 aa).

Residues Arg-93 and 131-133 contribute to the phosphate site; that span reads GTR.

This sequence belongs to the RNase PH family. Homohexameric ring arranged as a trimer of dimers.

The catalysed reaction is tRNA(n+1) + phosphate = tRNA(n) + a ribonucleoside 5'-diphosphate. Its function is as follows. Phosphorolytic 3'-5' exoribonuclease that plays an important role in tRNA 3'-end maturation. Removes nucleotide residues following the 3'-CCA terminus of tRNAs; can also add nucleotides to the ends of RNA molecules by using nucleoside diphosphates as substrates, but this may not be physiologically important. Probably plays a role in initiation of 16S rRNA degradation (leading to ribosome degradation) during starvation. The chain is Ribonuclease PH from Corynebacterium glutamicum (strain R).